We begin with the raw amino-acid sequence, 214 residues long: UPF0502 protein Acid345_3645 (214 aa).

Belongs to the UPF0502 family.

The chain is UPF0502 protein Acid345_3645 from Koribacter versatilis (strain Ellin345).